A 467-amino-acid chain; its full sequence is Probable apyrase 2 (467 aa).

At 1 to 25 (MRRYSALPGGGARPDTLADRLHRYR) the chain is on the cytoplasmic side. The chain crosses the membrane as a helical; Signal-anchor for type II membrane protein span at residues 26 to 46 (GVLLVILAPLALVSLVLLLMP). Residues 47–467 (RSPASSSAAA…PLGSAIEVAS (421 aa)) lie on the Extracellular side of the membrane. 70–80 (VIFDAGSSGSR) lines the ATP pocket. The active-site Proton acceptor is Glu-192. An ATP-binding site is contributed by 216 to 226 (GVVDLGGGSVQ).

This sequence belongs to the GDA1/CD39 NTPase family. Requires Ca(2+) as cofactor.

It localises to the membrane. It carries out the reaction a ribonucleoside 5'-triphosphate + 2 H2O = a ribonucleoside 5'-phosphate + 2 phosphate + 2 H(+). In terms of biological role, catalyzes the hydrolysis of phosphoanhydride bonds of nucleoside tri- and di-phosphates. The sequence is that of Probable apyrase 2 (APY2) from Oryza sativa subsp. japonica (Rice).